A 236-amino-acid polypeptide reads, in one-letter code: Endo-1,4-beta-xylanase 3 (236 aa).

The first 45 residues, 1–45 (MQILTWALAALAAIPAVTAAPVETVEASSMDELVERSPNVTLVAR), serve as a signal peptide directing secretion. N-linked (GlcNAc...) asparagine glycosylation is found at N39 and N106. Positions 46–236 (GTPSSTGTHN…SSGSASMTVR (191 aa)) constitute a GH11 domain. E131 (nucleophile) is an active-site residue. E223 acts as the Proton donor in catalysis.

The protein belongs to the glycosyl hydrolase 11 (cellulase G) family.

It localises to the secreted. It catalyses the reaction Endohydrolysis of (1-&gt;4)-beta-D-xylosidic linkages in xylans.. It participates in glycan degradation; xylan degradation. In terms of biological role, endo-1,4-beta-xylanase involved in the hydrolysis of xylan, a major structural heterogeneous polysaccharide found in plant biomass representing the second most abundant polysaccharide in the biosphere, after cellulose. This Pyricularia grisea (Crabgrass-specific blast fungus) protein is Endo-1,4-beta-xylanase 3 (XYL3).